The sequence spans 205 residues: Dihydrofolate reductase (205 aa).

The DHFR domain maps to 1 to 201 (MLALVVALAS…TSFKMFLYTK (201 aa)). NADP(+) contacts are provided by residues Ala7 and 13 to 19 (GIGNANA). Residue 29 to 34 (DMAWFR) coordinates substrate. 62–64 (RRT) serves as a coordination point for NADP(+). Arg78 contributes to the substrate binding site. NADP(+) is bound by residues 84–86 (SRG) and 118–125 (GGRDVYSL).

This sequence belongs to the dihydrofolate reductase family.

It carries out the reaction (6S)-5,6,7,8-tetrahydrofolate + NADP(+) = 7,8-dihydrofolate + NADPH + H(+). It participates in cofactor biosynthesis; tetrahydrofolate biosynthesis; 5,6,7,8-tetrahydrofolate from 7,8-dihydrofolate: step 1/1. Key enzyme in folate metabolism. Catalyzes an essential reaction for de novo glycine and purine synthesis, and for DNA precursor synthesis. The sequence is that of Dihydrofolate reductase (DHFR-1) from Encephalitozoon cuniculi (strain GB-M1) (Microsporidian parasite).